A 617-amino-acid chain; its full sequence is Probable Xaa-Pro aminopeptidase P (617 aa).

4 residues coordinate Mn(2+): D414, D425, E523, and E537.

The protein belongs to the peptidase M24B family. Requires Mn(2+) as cofactor.

It catalyses the reaction Release of any N-terminal amino acid, including proline, that is linked to proline, even from a dipeptide or tripeptide.. In terms of biological role, catalyzes the removal of a penultimate prolyl residue from the N-termini of peptides. This is Probable Xaa-Pro aminopeptidase P (AMPP) from Ajellomyces capsulatus (strain NAm1 / WU24) (Darling's disease fungus).